Consider the following 66-residue polypeptide: MPQLDTSTWLMMIMSMFLALFIIFQLKISKHNFHFNPELTLTKTQKQKTPWETKWTKIYLPLLLPQ.

A helical membrane pass occupies residues 8-24 (TWLMMIMSMFLALFIIF). Position 54 is an N6-acetyllysine; alternate (lysine 54). Lysine 54 carries the N6-succinyllysine; alternate modification. The residue at position 57 (lysine 57) is an N6-acetyllysine.

Belongs to the ATPase protein 8 family. As to quaternary structure, F-type ATPases have 2 components, CF(1) - the catalytic core - and CF(0) - the membrane proton channel. Component of an ATP synthase complex composed of ATP5PB, ATP5MC1, ATP5F1E, ATP5PD, ATP5ME, ATP5PF, ATP5MF, MT-ATP6, MT-ATP8, ATP5F1A, ATP5F1B, ATP5F1D, ATP5F1C, ATP5PO, ATP5MG, ATP5MK and ATP5MJ. Interacts with PRICKLE3.

Its subcellular location is the mitochondrion membrane. Mitochondrial membrane ATP synthase (F(1)F(0) ATP synthase or Complex V) produces ATP from ADP in the presence of a proton gradient across the membrane which is generated by electron transport complexes of the respiratory chain. F-type ATPases consist of two structural domains, F(1) - containing the extramembraneous catalytic core and F(0) - containing the membrane proton channel, linked together by a central stalk and a peripheral stalk. During catalysis, ATP synthesis in the catalytic domain of F(1) is coupled via a rotary mechanism of the central stalk subunits to proton translocation. Part of the complex F(0) domain. Minor subunit located with subunit a in the membrane. The sequence is that of ATP synthase protein 8 (MT-ATP8) from Cervus elaphus hippelaphus (European red deer).